A 445-amino-acid chain; its full sequence is Argininosuccinate synthase (445 aa).

ATP-binding positions include 17–25 (AFSGGLDTS) and A43. Y99 contacts L-citrulline. G129 and T131 together coordinate ATP. L-aspartate is bound by residues T131, N135, and D136. Residue N135 participates in L-citrulline binding. Residue D136 coordinates ATP. 2 residues coordinate L-citrulline: R139 and S192. D194 contacts ATP. L-citrulline-binding residues include T201, E203, and E280.

This sequence belongs to the argininosuccinate synthase family. Type 2 subfamily. Homotetramer.

The protein localises to the cytoplasm. It catalyses the reaction L-citrulline + L-aspartate + ATP = 2-(N(omega)-L-arginino)succinate + AMP + diphosphate + H(+). It participates in amino-acid biosynthesis; L-arginine biosynthesis; L-arginine from L-ornithine and carbamoyl phosphate: step 2/3. This is Argininosuccinate synthase from Rhodopseudomonas palustris (strain ATCC BAA-98 / CGA009).